Reading from the N-terminus, the 333-residue chain is MIDSSLPLTDIHRHLDGNIRAQTILDLGREFNIALPATTLDTLRPHVQVTSLEPDLVSFLAKLDWGVKVLASLEACRRVAYENVEDAARNGLHYVELRFSPRYMAMTHRLPVDGVVEAVIAGVQEGCRDFQVDARLIGILSRTFGEAACQEELAALLAHREGITALDLAGDELGFPGTLFRNHFNQARDAGWHITVHAGEAAGPESIWQAIRELGAERIGHGVKAVEDPALMDYLAEHRIGIESCLTSNVQTSTVASLAQHPLKQFLEHGVLASLNTDDPAVQGVDIIHEYTVAAPAAGLSREQIRQAQINGLTLAFLGEQEKAALIQRVAKG.

Zn(2+)-binding residues include His-12 and His-14. Positions 14, 16, and 170 each coordinate substrate. His-197 lines the Zn(2+) pocket. The Proton donor role is filled by Glu-200. Residue Asp-278 coordinates Zn(2+). Asp-279 contributes to the substrate binding site.

The protein belongs to the metallo-dependent hydrolases superfamily. Adenosine and AMP deaminases family. Adenosine deaminase subfamily. Zn(2+) is required as a cofactor.

It catalyses the reaction adenosine + H2O + H(+) = inosine + NH4(+). The catalysed reaction is 2'-deoxyadenosine + H2O + H(+) = 2'-deoxyinosine + NH4(+). Functionally, catalyzes the hydrolytic deamination of adenosine and 2-deoxyadenosine. The chain is Adenosine deaminase from Klebsiella pneumoniae subsp. pneumoniae (strain ATCC 700721 / MGH 78578).